The following is a 198-amino-acid chain: Outer-membrane lipoprotein carrier protein (198 aa).

Residues 1–17 (MKKFLFSLCLLSSTVLA) form the signal peptide.

The protein belongs to the LolA family. As to quaternary structure, monomer.

The protein resides in the periplasm. Its function is as follows. Participates in the translocation of lipoproteins from the inner membrane to the outer membrane. Only forms a complex with a lipoprotein if the residue after the N-terminal Cys is not an aspartate (The Asp acts as a targeting signal to indicate that the lipoprotein should stay in the inner membrane). This chain is Outer-membrane lipoprotein carrier protein, found in Aliivibrio fischeri (strain MJ11) (Vibrio fischeri).